The primary structure comprises 194 residues: dCTP deaminase, dUMP-forming (194 aa).

Residues 104–109, aspartate 122, 130–132, glutamine 151, tyrosine 165, lysine 172, and glutamine 176 each bind dCTP; these read RSSLGR and TLE. Glutamate 132 (proton donor/acceptor) is an active-site residue.

It belongs to the dCTP deaminase family. As to quaternary structure, homotrimer.

The catalysed reaction is dCTP + 2 H2O = dUMP + NH4(+) + diphosphate. Its pathway is pyrimidine metabolism; dUMP biosynthesis; dUMP from dCTP: step 1/1. In terms of biological role, bifunctional enzyme that catalyzes both the deamination of dCTP to dUTP and the hydrolysis of dUTP to dUMP without releasing the toxic dUTP intermediate. In Dictyoglomus turgidum (strain DSM 6724 / Z-1310), this protein is dCTP deaminase, dUMP-forming.